A 91-amino-acid polypeptide reads, in one-letter code: Apolipoprotein C-III (91 aa).

The signal sequence occupies residues 1–20 (MQPRVLLAVTLLALLVSARA). Methionine 63 carries the post-translational modification Methionine sulfoxide. Residues 68-91 (DSMKGYWTSLIGRLSGFLDSTPSS) are lipid-binding.

This sequence belongs to the apolipoprotein C3 family.

Its subcellular location is the secreted. In terms of biological role, component of triglyceride-rich very low density lipoproteins (VLDL) and high density lipoproteins (HDL) in plasma. Plays a multifaceted role in triglyceride homeostasis. Intracellularly, promotes hepatic very low density lipoprotein 1 (VLDL1) assembly and secretion; extracellularly, attenuates hydrolysis and clearance of triglyceride-rich lipoproteins (TRLs). Impairs the lipolysis of TRLs by inhibiting lipoprotein lipase and the hepatic uptake of TRLs by remnant receptors. Formed of several curved helices connected via semiflexible hinges, so that it can wrap tightly around the curved micelle surface and easily adapt to the different diameters of its natural binding partners. This Cavia porcellus (Guinea pig) protein is Apolipoprotein C-III (APOC3).